The sequence spans 62 residues: Large ribosomal subunit protein uL29 (62 aa).

It belongs to the universal ribosomal protein uL29 family.

The protein is Large ribosomal subunit protein uL29 of Desulfosudis oleivorans (strain DSM 6200 / JCM 39069 / Hxd3) (Desulfococcus oleovorans).